The primary structure comprises 331 residues: Vacuolar protein sorting-associated protein 26B (331 aa).

A disordered region spans residues 310–331 (AAQRYEGSNPEPTSAQAKEETD).

This sequence belongs to the VPS26 family. As to quaternary structure, component of the heterotrimeric retromer cargo-selective complex (CSC) which is believed to associate with variable sorting nexins to form functionally distinct retromer complex variants.

It is found in the cytoplasm. Its subcellular location is the membrane. The protein resides in the endosome. Functionally, acts as a component of the retromer cargo-selective complex (CSC). The CSC is believed to be the core functional component of retromer or respective retromer complex variants acting to prevent missorting of selected transmembrane cargo proteins into the lysosomal degradation pathway. Retromer mediates retrograde transport of cargo proteins from endosomes to the trans-Golgi network (TGN). This Danio rerio (Zebrafish) protein is Vacuolar protein sorting-associated protein 26B (vps26b).